The chain runs to 204 residues: Peroxynitrite isomerase (204 aa).

The short motif at 21–27 (GEWEGSG) is the GXWXGXG element. His-195 is a heme b binding site.

It belongs to the nitrobindin family. Homodimer. Heme b serves as cofactor.

It carries out the reaction peroxynitrite = nitrate. The protein operates within nitrogen metabolism. Its function is as follows. Heme-binding protein able to scavenge peroxynitrite and to protect free L-tyrosine against peroxynitrite-mediated nitration, by acting as a peroxynitrite isomerase that converts peroxynitrite to nitrate. Therefore, this protein likely plays a role in peroxynitrite sensing and in the detoxification of reactive nitrogen and oxygen species (RNS and ROS, respectively). Is able to bind nitric oxide (NO) in vitro, but may act as a sensor of peroxynitrite levels in vivo. The polypeptide is Peroxynitrite isomerase (Arthrobacter sp. (strain FB24)).